A 237-amino-acid chain; its full sequence is Placenta-expressed transcript 1 protein (237 aa).

The N-terminal stretch at 1–27 is a signal peptide; that stretch reads MLSLRSLLPHLGLFLCLALHLSPSLSA. 4 N-linked (GlcNAc...) asparagine glycosylation sites follow: asparagine 30, asparagine 67, asparagine 103, and asparagine 136. The segment covering 145–162 has biased composition (polar residues); it reads KMEQVQPSASTPIPESSE. The segment at 145–170 is disordered; it reads KMEQVQPSASTPIPESSETSQTINTT. Residue serine 218 is the site of GPI-anchor amidated serine attachment. Positions 219–237 are cleaved as a propeptide — removed in mature form; that stretch reads PLAGALHILLVFLISKLLF.

In terms of processing, N-glycosylated. Post-translationally, GPI-anchored. Present in hair follicle cells and sebaceous gland of skin, ciliated epithelial cells of trachea and bronchial tube, striated portion of submandibular gland, distal convoluted tubule cells of kidney, ciliated epithelial cells of oviduct, medulla of adrenal gland and anterior lobe of pituitary gland. Expressed in keratinocytes of the hair follicle at the trichilemmal zone corresponding to the terminally differentiated outermost suprabasal outer root sheath (ORS), including that of the sebaceous gland duct (SGD) and the directly adjacent upper distal end of the companion layer (CL). Expression is similar in all hair follicle growth stages. Also detected during both the early and late anagen phases above the bulge of stem cells. Expressed at the leading edge of the epidermal wound. Not expressed in the interfollicular epidermis (IFE), inner root sheath (IRS) and hair fiber. Highly expressed in placenta. Detected in mammary and prostate epithelia and in the pancreas (at protein level).

Its subcellular location is the apical cell membrane. Functionally, modulates leading keratinocyte migration and cellular adhesion to matrix proteins during a wound-healing response and promotes wound repair. May play a role during trichilemmal differentiation of the hair follicle. The polypeptide is Placenta-expressed transcript 1 protein (Plet1) (Mus musculus (Mouse)).